The sequence spans 250 residues: Accessory gland-specific peptide 26Aa (250 aa).

The signal sequence occupies residues 1–18; the sequence is MNQILLCSQILLLFFTVA. The tract at residues 79–100 is disordered; it reads DYPINNSKSRKNSSTLPSPILT. The span at 82 to 95 shows a compositional bias: polar residues; sequence INNSKSRKNSSTLP. 3 N-linked (GlcNAc...) asparagine glycosylation sites follow: Asn83, Asn90, and Asn131. Disordered stretches follow at residues 172–191 and 230–250; these read NVQN…SKDI and NNPA…PSTT. Basic residues predominate over residues 178-187; the sequence is KSTKSCKKRP. Over residues 240–250 the composition is skewed to polar residues; it reads KSPSEGNPSTT.

Proteolytically cleaved as it is secreted and in the recipient female. Main cells of the accessory glands of males.

It localises to the secreted. The protein localises to the extracellular space. Its function is as follows. This protein is transferred from male to female's hemolymph during mating, affecting egglaying and behavior after mating. The sequence is that of Accessory gland-specific peptide 26Aa (Acp26Aa) from Drosophila mauritiana (Fruit fly).